Reading from the N-terminus, the 151-residue chain is D-aminoacyl-tRNA deacylase (151 aa).

The Gly-cisPro motif, important for rejection of L-amino acids signature appears at 137 to 138 (GP).

This sequence belongs to the DTD family. As to quaternary structure, homodimer.

The protein resides in the cytoplasm. It carries out the reaction glycyl-tRNA(Ala) + H2O = tRNA(Ala) + glycine + H(+). The catalysed reaction is a D-aminoacyl-tRNA + H2O = a tRNA + a D-alpha-amino acid + H(+). In terms of biological role, an aminoacyl-tRNA editing enzyme that deacylates mischarged D-aminoacyl-tRNAs. Also deacylates mischarged glycyl-tRNA(Ala), protecting cells against glycine mischarging by AlaRS. Acts via tRNA-based rather than protein-based catalysis; rejects L-amino acids rather than detecting D-amino acids in the active site. By recycling D-aminoacyl-tRNA to D-amino acids and free tRNA molecules, this enzyme counteracts the toxicity associated with the formation of D-aminoacyl-tRNA entities in vivo and helps enforce protein L-homochirality. This Listeria monocytogenes serotype 4a (strain HCC23) protein is D-aminoacyl-tRNA deacylase.